We begin with the raw amino-acid sequence, 211 residues long: Small ribosomal subunit protein uS3 (211 aa).

One can recognise a KH type-2 domain in the interval 38-106 (LRNFLKKRLY…EVYLNIQEVR (69 aa)).

It belongs to the universal ribosomal protein uS3 family. Part of the 30S ribosomal subunit. Forms a tight complex with proteins S10 and S14.

Binds the lower part of the 30S subunit head. Binds mRNA in the 70S ribosome, positioning it for translation. The sequence is that of Small ribosomal subunit protein uS3 from Geobacter sp. (strain M21).